We begin with the raw amino-acid sequence, 666 residues long: Long-chain-fatty-acid--CoA ligase ACSBG2 (666 aa).

ATP is bound by residues 230–238, 418–423, Asp496, and Arg624; these read TSGTTGIPK and ELYGLS.

It belongs to the ATP-dependent AMP-binding enzyme family. Bubblegum subfamily. In terms of tissue distribution, testis-specific.

Its subcellular location is the cytoplasm. It localises to the membrane. It catalyses the reaction a long-chain fatty acid + ATP + CoA = a long-chain fatty acyl-CoA + AMP + diphosphate. The catalysed reaction is (5Z,8Z,11Z,14Z)-eicosatetraenoate + ATP + CoA = (5Z,8Z,11Z,14Z)-eicosatetraenoyl-CoA + AMP + diphosphate. It carries out the reaction hexadecanoate + ATP + CoA = hexadecanoyl-CoA + AMP + diphosphate. The enzyme catalyses (9Z)-octadecenoate + ATP + CoA = (9Z)-octadecenoyl-CoA + AMP + diphosphate. It catalyses the reaction (9Z,12Z)-octadecadienoate + ATP + CoA = (9Z,12Z)-octadecadienoyl-CoA + AMP + diphosphate. The catalysed reaction is tetracosanoate + ATP + CoA = tetracosanoyl-CoA + AMP + diphosphate. Functionally, catalyzes the conversion of fatty acids such as long chain and very long-chain fatty acids to their active form acyl-CoAs for both synthesis of cellular lipids, and degradation via beta-oxidation. Can activate diverse saturated, monosaturated and polyunsaturated fatty acids. Has increased ability to activate oleic and linoleic acid. May play a role in spermatogenesis. This chain is Long-chain-fatty-acid--CoA ligase ACSBG2, found in Homo sapiens (Human).